Reading from the N-terminus, the 33-residue chain is MNIELIVQLGSLTLITIAGPLIVALLFLRQGNL.

Residues 5–25 form a helical membrane-spanning segment; the sequence is LIVQLGSLTLITIAGPLIVAL.

The protein belongs to the Psb30/Ycf12 family. PSII is composed of 1 copy each of membrane proteins PsbA, PsbB, PsbC, PsbD, PsbE, PsbF, PsbH, PsbI, PsbJ, PsbK, PsbL, PsbM, PsbT, PsbY, PsbZ, Psb30/Ycf12, peripheral proteins of the oxygen-evolving complex and a large number of cofactors. It forms dimeric complexes.

It localises to the plastid. The protein resides in the chloroplast thylakoid membrane. In terms of biological role, a core subunit of photosystem II (PSII), probably helps stabilize the reaction center. The sequence is that of Photosystem II reaction center protein Psb30 from Euglena mutabilis.